The primary structure comprises 2998 residues: Probable polyketide synthase 14 (2998 aa).

In terms of domain architecture, Ketosynthase family 3 (KS3) spans 19–456 (EDDIAIIGIG…GSNCCLILSE (438 aa)). Residues Cys189, His331, and His376 each act as for beta-ketoacyl synthase activity in the active site. Residues 657–690 (GIEASFIVGHSLGEIPAAYCSGMITLDTLCYLIY) are acyl/malonyl transferase. The active-site For acyl/malonyl transferase activity is Ser667. Residues 962 to 1084 (IDQLGFSLIE…GNFQLFTSGN (123 aa)) form an N-terminal hotdog fold region. In terms of domain architecture, PKS/mFAS DH spans 962 to 1249 (IDQLGFSLIE…CKSLTIIKDS (288 aa)). Residue His996 is the Proton acceptor; for dehydratase activity of the active site. Residues 1101-1249 (NLTKLTKNEL…CKSLTIIKDS (149 aa)) are C-terminal hotdog fold. The active-site Proton donor; for dehydratase activity is Asp1159. The helical transmembrane segment at 1979-1999 (SILIHSGSGGIGLSALNILKW) threads the bilayer. Positions 2476-2553 (ENDTSIDSLF…SSIKLITNQL (78 aa)) constitute a Carrier domain. Residue Ser2513 is modified to O-(pantetheine 4'-phosphoryl)serine. The tract at residues 2559–2578 (DGQQQQHRQNKKNNNIPENK) is disordered. The segment covering 2561-2573 (QQQQHRQNKKNNN) has biased composition (low complexity). The helical transmembrane segment at 2621–2641 (IFLTGSTGFLGAYLLWYLIQM) threads the bilayer.

Pantetheine 4'-phosphate serves as cofactor.

It localises to the membrane. Its function is as follows. Probable polyketide synthase. The polypeptide is Probable polyketide synthase 14 (pks14) (Dictyostelium discoideum (Social amoeba)).